Here is a 377-residue protein sequence, read N- to C-terminus: Homoserine O-succinyltransferase (377 aa).

The 309-residue stretch at 50 to 358 (NAVLICHALS…PSSYGHDSFL (309 aa)) folds into the AB hydrolase-1 domain. Catalysis depends on serine 156, which acts as the Nucleophile. Arginine 226 is a substrate binding site. Active-site residues include aspartate 321 and histidine 354. Aspartate 355 is a substrate binding site.

The protein belongs to the AB hydrolase superfamily. MetX family. In terms of assembly, homodimer.

It localises to the cytoplasm. It catalyses the reaction L-homoserine + succinyl-CoA = O-succinyl-L-homoserine + CoA. Its pathway is amino-acid biosynthesis; L-methionine biosynthesis via de novo pathway; O-succinyl-L-homoserine from L-homoserine: step 1/1. Its function is as follows. Transfers a succinyl group from succinyl-CoA to L-homoserine, forming succinyl-L-homoserine. In Nitrosomonas europaea (strain ATCC 19718 / CIP 103999 / KCTC 2705 / NBRC 14298), this protein is Homoserine O-succinyltransferase.